Reading from the N-terminus, the 109-residue chain is Parvalbumin beta (109 aa).

Position 1 is an N-acetylserine (Ser1). EF-hand domains are found at residues 38 to 73 and 77 to 109; these read KTPDVIKKAFYVIDQDKSGFIEEDELKLFLQNFASS and LTDKETETFLKAGDSDGDGKIGIDEFADLVKEA. Residues Asp51, Asp53, Ser55, Phe57, Glu59, Glu62, Asp90, Asp92, Asp94, Lys96, and Glu101 each contribute to the Ca(2+) site.

It belongs to the parvalbumin family.

In muscle, parvalbumin is thought to be involved in relaxation after contraction. It binds two calcium ions. The polypeptide is Parvalbumin beta (Opsanus tau (Oyster toadfish)).